A 521-amino-acid polypeptide reads, in one-letter code: Chromaffin granule amine transporter (521 aa).

At 1-21 (MLQVVLGAPQRLLKEGRQSRK) the chain is on the cytoplasmic side. Residues 22 to 42 (LVLVVVFVALLLDNMLLTVVV) form a helical membrane-spanning segment. Residues 43 to 135 (PIVPTFLYAT…IEFLEEENVR (93 aa)) are Lumenal, vesicle-facing. N-linked (GlcNAc...) asparagine glycosylation is found at Asn-58, Asn-87, and Asn-104. Residues 136-155 (IGILFASKALMQLLVNPFVG) traverse the membrane as a helical segment. Residues 156 to 164 (PLTNRIGYH) are Cytoplasmic-facing. Residues 165 to 185 (IPMFVGFMIMFLSTLMFAFSG) form a helical membrane-spanning segment. Topologically, residues 186-194 (TYALLFVAR) are lumenal, vesicle. The helical transmembrane segment at 195-215 (TLQGIGSSFSSVAGLGMLASV) threads the bilayer. Residues 216 to 224 (YTDNYERGR) are Cytoplasmic-facing. The chain crosses the membrane as a helical span at residues 225–247 (AMGIALGGLALGLLVGAPFGSVM). At 248 to 253 (YEFVGK) the chain is on the lumenal, vesicle side. The chain crosses the membrane as a helical span at residues 254-276 (SSPFLILAFLALLDGALQLCILW). Topologically, residues 277-296 (PSKVSPESAMGTSLLTLLKD) are cytoplasmic. The helical transmembrane segment at 297–316 (PYILVAAGSICLANMGVAIL) threads the bilayer. The Lumenal, vesicle portion of the chain corresponds to 317 to 332 (EPTLPIWMMQTMCSPE). The chain crosses the membrane as a helical span at residues 333–357 (WQLGLAFLPASVAYLIGTNLFGVLA). Residues 358 to 362 (NKMGR) are Cytoplasmic-facing. A helical membrane pass occupies residues 363–383 (WLCSLVGMVAVGISLLCVPLA). The Lumenal, vesicle portion of the chain corresponds to 384 to 394 (HNIFGLIGPNA). A helical membrane pass occupies residues 395–415 (GLGFAIGMVDSSLMPIMGYLV). Residues 416 to 419 (DLRH) lie on the Cytoplasmic side of the membrane. The chain crosses the membrane as a helical span at residues 420-440 (TSVYGSVYAIADVAFCVGFAI). Over 441–445 (GPSTG) the chain is Lumenal, vesicle. Residues 446–467 (GVIVQVIGFPWLMVIIGTINII) traverse the membrane as a helical segment. Topologically, residues 468 to 521 (YAPLCCFLQNPPAKEEKRAILSQECPTETQMYTFQKPTKAFPLGENSDDPSSGE) are cytoplasmic.

Belongs to the major facilitator superfamily. Vesicular transporter family. Adrenal gland.

The protein resides in the cytoplasmic vesicle. Its subcellular location is the secretory vesicle membrane. It is found in the secretory vesicle. It localises to the synaptic vesicle membrane. It catalyses the reaction serotonin(in) + 2 H(+)(out) = serotonin(out) + 2 H(+)(in). The enzyme catalyses (R)-noradrenaline(in) + 2 H(+)(out) = (R)-noradrenaline(out) + 2 H(+)(in). The catalysed reaction is dopamine(in) + 2 H(+)(out) = dopamine(out) + 2 H(+)(in). With respect to regulation, strongly inhibited by reserpine, ketanserin and methamphetamine. Also inhibited weakly by tetrabenazine. Electrogenic antiporter that exchanges one cationic monoamine with two intravesicular protons across the membrane of secretory and synaptic vesicles. Uses the electrochemical proton gradient established by the V-type proton-pump ATPase to accumulate high concentrations of monoamines inside the vesicles prior to their release via exocytosis. Transports catecholamines and indolamines with higher affinity for serotonin. Regulates the transvesicular monoaminergic gradient that determines the quantal size. Mediates presynaptic monoaminergic vesicle transport in the amygdala and prefrontal brain regions related with emotion processing in response to environmental stimuli. This is Chromaffin granule amine transporter (Slc18a1) from Rattus norvegicus (Rat).